The following is a 429-amino-acid chain: Histidine--tRNA ligase (429 aa).

This sequence belongs to the class-II aminoacyl-tRNA synthetase family. In terms of assembly, homodimer.

It localises to the cytoplasm. It carries out the reaction tRNA(His) + L-histidine + ATP = L-histidyl-tRNA(His) + AMP + diphosphate + H(+). This Streptococcus pneumoniae (strain CGSP14) protein is Histidine--tRNA ligase.